Reading from the N-terminus, the 252-residue chain is Trans-aconitate 2-methyltransferase (252 aa).

This sequence belongs to the methyltransferase superfamily. Tam family.

Its subcellular location is the cytoplasm. It carries out the reaction trans-aconitate + S-adenosyl-L-methionine = (E)-3-(methoxycarbonyl)pent-2-enedioate + S-adenosyl-L-homocysteine. Catalyzes the S-adenosylmethionine monomethyl esterification of trans-aconitate. The sequence is that of Trans-aconitate 2-methyltransferase from Escherichia coli (strain ATCC 8739 / DSM 1576 / NBRC 3972 / NCIMB 8545 / WDCM 00012 / Crooks).